Consider the following 109-residue polypeptide: GDVEAGKAAFNKCKACHEIGESAKNKVGPELDGLDGRHSGAVEGYAYSPANKASGITWTEAEFKEYIKDPKAKVPGTKMVFAGIKKDSELDNLWAYVSQFDKDGKVKAK.

Positions 13, 16, 17, and 79 each coordinate heme c.

Post-translationally, binds 1 heme c group covalently per subunit.

The chain is Cytochrome c-550 from Nitrobacter winogradskyi (Nitrobacter agilis).